The chain runs to 188 residues: Elongation factor P (188 aa).

K34 bears the N6-(3,6-diaminohexanoyl)-5-hydroxylysine mark.

Belongs to the elongation factor P family. May be beta-lysylated on the epsilon-amino group of Lys-34 by the combined action of EpmA and EpmB, and then hydroxylated on the C5 position of the same residue by EpmC (if this protein is present). Lysylation is critical for the stimulatory effect of EF-P on peptide-bond formation. The lysylation moiety may extend toward the peptidyltransferase center and stabilize the terminal 3-CCA end of the tRNA. Hydroxylation of the C5 position on Lys-34 may allow additional potential stabilizing hydrogen-bond interactions with the P-tRNA.

It is found in the cytoplasm. It participates in protein biosynthesis; polypeptide chain elongation. Its function is as follows. Involved in peptide bond synthesis. Alleviates ribosome stalling that occurs when 3 or more consecutive Pro residues or the sequence PPG is present in a protein, possibly by augmenting the peptidyl transferase activity of the ribosome. Modification of Lys-34 is required for alleviation. The protein is Elongation factor P of Hamiltonella defensa subsp. Acyrthosiphon pisum (strain 5AT).